Here is a 91-residue protein sequence, read N- to C-terminus: Small ribosomal subunit protein bS18 (91 aa).

Belongs to the bacterial ribosomal protein bS18 family. Part of the 30S ribosomal subunit. Forms a tight heterodimer with protein bS6.

Binds as a heterodimer with protein bS6 to the central domain of the 16S rRNA, where it helps stabilize the platform of the 30S subunit. This Wolbachia pipientis wMel protein is Small ribosomal subunit protein bS18.